A 161-amino-acid chain; its full sequence is uncharacterized protein (161 aa).

This is an uncharacterized protein from Lepidoptera (butterflies and moths).